The chain runs to 118 residues: Large ribosomal subunit protein bL20 (118 aa).

Belongs to the bacterial ribosomal protein bL20 family.

Its function is as follows. Binds directly to 23S ribosomal RNA and is necessary for the in vitro assembly process of the 50S ribosomal subunit. It is not involved in the protein synthesizing functions of that subunit. This Marinomonas sp. (strain MWYL1) protein is Large ribosomal subunit protein bL20.